A 182-amino-acid polypeptide reads, in one-letter code: UPF0397 protein BCAH820_2657 (182 aa).

Transmembrane regions (helical) follow at residues 9–29 (VVAI…GFTI), 40–60 (AILT…IGLI), 71–91 (WGIW…MGFI), 114–134 (ITGL…DIIV), and 142–162 (IVIQ…VLGL).

The protein belongs to the UPF0397 family.

It is found in the cell membrane. The polypeptide is UPF0397 protein BCAH820_2657 (Bacillus cereus (strain AH820)).